A 475-amino-acid polypeptide reads, in one-letter code: MSPQTETKAGVGFKAGVKDYRLTYYTPDYETKDTDILAAFRMTPQPGVPPEEAGAAVAAESSTGTWTTVWTDGLTSLDRYKGRCYDIEPVAGEENQYIAYVAYPLDLFEEGSVTNMFTSIVGNVFGFKALRALRLEDLRIPPAYSKTFQGPPHGIQVERDKLNKYGRPLLGCTIKPKLGLSAKNYGRAVYECLRGGLDFTKDDENVNSQPFMRWRDRFLFVAEAIFKSQAETGEIKGHYLNATAGTCEEMMKRAHFARELGMPIVMHDYLTGGFTANTTLARYCRDNGLLLHIHRAMHAVIDRQRNHGIHFRVLAKALRMSGGDHIHSGTVVGKLEGEREVTLGFVDLLRDDYIEKDRSRGIYFTQDWVSMPGVLPVASGGIHVWHMSALTEIFGDDSVLQFGGGTLGHPWGNAPGAVANRVALEACVQARNEGRDLAREGNDIIREASKWSPELAAACEVWKEIKFVFETIDTL.

A propeptide spanning residues Met1–Ser2 is cleaved from the precursor. Pro3 is modified (N-acetylproline). Lys14 carries the N6,N6,N6-trimethyllysine modification. Substrate contacts are provided by Asn123 and Thr173. The active-site Proton acceptor is Lys175. Lys177 provides a ligand contact to substrate. 3 residues coordinate Mg(2+): Lys201, Asp203, and Glu204. Position 201 is an N6-carboxylysine (Lys201). The Proton acceptor role is filled by His294. Arg295, His327, and Ser379 together coordinate substrate.

Belongs to the RuBisCO large chain family. Type I subfamily. In terms of assembly, heterohexadecamer of 8 large chains and 8 small chains; disulfide-linked. The disulfide link is formed within the large subunit homodimers. The cofactor is Mg(2+). In terms of processing, the disulfide bond which can form in the large chain dimeric partners within the hexadecamer appears to be associated with oxidative stress and protein turnover.

It localises to the plastid. The protein localises to the chloroplast. The enzyme catalyses 2 (2R)-3-phosphoglycerate + 2 H(+) = D-ribulose 1,5-bisphosphate + CO2 + H2O. It catalyses the reaction D-ribulose 1,5-bisphosphate + O2 = 2-phosphoglycolate + (2R)-3-phosphoglycerate + 2 H(+). In terms of biological role, ruBisCO catalyzes two reactions: the carboxylation of D-ribulose 1,5-bisphosphate, the primary event in carbon dioxide fixation, as well as the oxidative fragmentation of the pentose substrate in the photorespiration process. Both reactions occur simultaneously and in competition at the same active site. This chain is Ribulose bisphosphate carboxylase large chain, found in Anthoceros angustus (Hornwort).